The following is a 308-amino-acid chain: Protein translocase subunit SecF (308 aa).

Transmembrane regions (helical) follow at residues 14-34 (FFLL…LFGF), 134-154 (VYAV…RFEF), 158-178 (ISGI…FALL), 185-205 (TFVA…IVIF), 238-258 (SIRT…FGGI), and 267-287 (LIIG…PIWV).

It belongs to the SecD/SecF family. SecF subfamily. Forms a complex with SecD. Part of the essential Sec protein translocation apparatus which comprises SecA, SecYEG and auxiliary proteins SecDF. Other proteins may also be involved.

Its subcellular location is the cell membrane. Its function is as follows. Part of the Sec protein translocase complex. Interacts with the SecYEG preprotein conducting channel. SecDF uses the proton motive force (PMF) to complete protein translocation after the ATP-dependent function of SecA. The sequence is that of Protein translocase subunit SecF from Alicyclobacillus acidocaldarius subsp. acidocaldarius (strain ATCC 27009 / DSM 446 / BCRC 14685 / JCM 5260 / KCTC 1825 / NBRC 15652 / NCIMB 11725 / NRRL B-14509 / 104-IA) (Bacillus acidocaldarius).